The chain runs to 503 residues: Adenosine deaminase 2-A (503 aa).

An N-terminal signal peptide occupies residues 1-24; the sequence is MHVLFLGDLMWIYLLLLCCASCNG. Zn(2+)-binding residues include H105 and H107. D108 provides a ligand contact to substrate. N120 carries N-linked (GlcNAc...) asparagine glycosylation. The cysteines at positions 130 and 152 are disulfide-linked. N167 and N178 each carry an N-linked (GlcNAc...) asparagine glycan. Substrate contacts are provided by residues 197–204 and H286; that span reads WERFEQVF. N-linked (GlcNAc...) asparagine glycosylation is present at N290. G319 serves as a coordination point for substrate. H349 lines the Zn(2+) pocket. The active-site Proton donor is E352. N371 carries an N-linked (GlcNAc...) asparagine glycan. H377 (proton acceptor) is an active-site residue. D434 provides a ligand contact to Zn(2+). D435 provides a ligand contact to substrate.

Belongs to the metallo-dependent hydrolases superfamily. Adenosine and AMP deaminases family. ADGF subfamily. It depends on Zn(2+) as a cofactor.

The protein resides in the secreted. The catalysed reaction is adenosine + H2O + H(+) = inosine + NH4(+). Its function is as follows. Adenosine deaminase that may contribute to the degradation of extracellular adenosine, a signaling molecule that controls a variety of cellular responses. May play a role in the regulation of cell proliferation. This chain is Adenosine deaminase 2-A, found in Danio rerio (Zebrafish).